The primary structure comprises 238 residues: Small ribosomal subunit protein uS3 (238 aa).

The 69-residue stretch at 39–107 folds into the KH type-2 domain; it reads MREFIHDYAK…ELHLNIVEIR (69 aa). The span at 212-222 shows a compositional bias: basic and acidic residues; sequence PQAHDRRHSEA. A disordered region spans residues 212–238; it reads PQAHDRRHSEAQEGAAPRPPRRDRERA.

Belongs to the universal ribosomal protein uS3 family. As to quaternary structure, part of the 30S ribosomal subunit. Forms a tight complex with proteins S10 and S14.

Its function is as follows. Binds the lower part of the 30S subunit head. Binds mRNA in the 70S ribosome, positioning it for translation. In Cereibacter sphaeroides (strain ATCC 17025 / ATH 2.4.3) (Rhodobacter sphaeroides), this protein is Small ribosomal subunit protein uS3.